Here is a 440-residue protein sequence, read N- to C-terminus: Syntrophin-1 (440 aa).

2 consecutive PH domains span residues Ala2 to Thr208 and Gln227 to Tyr340. A PDZ domain is found at Thr45 to Arg128. One can recognise an SU domain in the interval Ser384–Ala440.

Belongs to the syntrophin family. As to quaternary structure, component of the dystrophin glycoprotein complex (DGC). Interacts with dyb-1, dys-1 and snf-6 to form the DGC. Expressed in neurons and muscles; particularly strong expression in the body wall, head and vulval muscles, and in ventral nerve cord (at protein level).

It localises to the membrane. The protein resides in the cytoplasm. The protein localises to the cytoskeleton. Adapter protein that binds to and probably organizes the subcellular localization of a variety of membrane proteins. May link various receptors to the actin cytoskeleton and the dystrophin glycoprotein complex (DGC). May also act by slowing calcium channel activity via a direct or indirect mechanism potentially involving other second messengers. Plays an early role in the formation of the neuromuscular junction and is necessary for muscle maintenance. This chain is Syntrophin-1, found in Caenorhabditis elegans.